The sequence spans 727 residues: NADH-ubiquinone oxidoreductase 75 kDa subunit, mitochondrial (727 aa).

The transit peptide at M1–T23 directs the protein to the mitochondrion. Positions N30–K108 constitute a 2Fe-2S ferredoxin-type domain. C64, C75, and C78 together coordinate [2Fe-2S] cluster. Position 84 is an N6-acetyllysine (K84). Position 92 (C92) interacts with [2Fe-2S] cluster. One can recognise a 4Fe-4S His(Cys)3-ligated-type domain in the interval K108–G147. The [4Fe-4S] cluster site is built by H124, C128, C131, C137, C176, C179, C182, and C226. The region spanning T245–R301 is the 4Fe-4S Mo/W bis-MGD-type domain. An N6-acetyllysine mark is found at K467, K499, and K709.

The protein belongs to the complex I 75 kDa subunit family. In terms of assembly, core subunit of respiratory chain NADH dehydrogenase (Complex I) which is composed of 45 different subunits. This is the largest subunit of complex I and it is a component of the iron-sulfur (IP) fragment of the enzyme. Complex I associates with ubiquinol-cytochrome reductase complex (Complex III) to form supercomplexes. Interacts with MDM2 and AKAP1. [2Fe-2S] cluster serves as cofactor. Requires [4Fe-4S] cluster as cofactor.

It is found in the mitochondrion inner membrane. It catalyses the reaction a ubiquinone + NADH + 5 H(+)(in) = a ubiquinol + NAD(+) + 4 H(+)(out). Its function is as follows. Core subunit of the mitochondrial membrane respiratory chain NADH dehydrogenase (Complex I) which catalyzes electron transfer from NADH through the respiratory chain, using ubiquinone as an electron acceptor. Essential for catalysing the entry and efficient transfer of electrons within complex I. Plays a key role in the assembly and stability of complex I and participates in the association of complex I with ubiquinol-cytochrome reductase complex (Complex III) to form supercomplexes. The polypeptide is NADH-ubiquinone oxidoreductase 75 kDa subunit, mitochondrial (NDUFS1) (Pongo abelii (Sumatran orangutan)).